Reading from the N-terminus, the 191-residue chain is Photosystem I assembly protein Ycf4 (191 aa).

2 helical membrane passes run 33-53 (LLAV…LSSY) and 74-94 (LVMG…WAMI).

It belongs to the Ycf4 family.

The protein localises to the cellular thylakoid membrane. Its function is as follows. Seems to be required for the assembly of the photosystem I complex. The sequence is that of Photosystem I assembly protein Ycf4 from Prochlorococcus marinus (strain MIT 9303).